A 198-amino-acid polypeptide reads, in one-letter code: Pyridoxal 5'-phosphate synthase subunit PdxT (198 aa).

49-51 (GES) contacts L-glutamine. Catalysis depends on Cys-81, which acts as the Nucleophile. L-glutamine is bound by residues Arg-113 and 141-142 (IR). Active-site charge relay system residues include His-177 and Glu-179.

This sequence belongs to the glutaminase PdxT/SNO family. In the presence of PdxS, forms a dodecamer of heterodimers. Only shows activity in the heterodimer.

The enzyme catalyses aldehydo-D-ribose 5-phosphate + D-glyceraldehyde 3-phosphate + L-glutamine = pyridoxal 5'-phosphate + L-glutamate + phosphate + 3 H2O + H(+). It carries out the reaction L-glutamine + H2O = L-glutamate + NH4(+). It participates in cofactor biosynthesis; pyridoxal 5'-phosphate biosynthesis. Its function is as follows. Catalyzes the hydrolysis of glutamine to glutamate and ammonia as part of the biosynthesis of pyridoxal 5'-phosphate. The resulting ammonia molecule is channeled to the active site of PdxS. The polypeptide is Pyridoxal 5'-phosphate synthase subunit PdxT (Mycobacterium ulcerans (strain Agy99)).